A 385-amino-acid polypeptide reads, in one-letter code: 1-deoxy-D-xylulose 5-phosphate reductoisomerase (385 aa).

Thr10, Gly11, Ser12, Ile13, Lys37, and Asn124 together coordinate NADPH. 1-deoxy-D-xylulose 5-phosphate is bound at residue Lys125. An NADPH-binding site is contributed by Glu126. Asp150 serves as a coordination point for Mn(2+). Residues Ser151, Glu152, Ser176, and His199 each coordinate 1-deoxy-D-xylulose 5-phosphate. Position 152 (Glu152) interacts with Mn(2+). Gly205 provides a ligand contact to NADPH. The 1-deoxy-D-xylulose 5-phosphate site is built by Ser212, Asn217, Lys218, and Glu221. Glu221 lines the Mn(2+) pocket.

It belongs to the DXR family. It depends on Mg(2+) as a cofactor. Mn(2+) serves as cofactor.

It catalyses the reaction 2-C-methyl-D-erythritol 4-phosphate + NADP(+) = 1-deoxy-D-xylulose 5-phosphate + NADPH + H(+). Its pathway is isoprenoid biosynthesis; isopentenyl diphosphate biosynthesis via DXP pathway; isopentenyl diphosphate from 1-deoxy-D-xylulose 5-phosphate: step 1/6. Functionally, catalyzes the NADPH-dependent rearrangement and reduction of 1-deoxy-D-xylulose-5-phosphate (DXP) to 2-C-methyl-D-erythritol 4-phosphate (MEP). In Clostridium botulinum (strain Kyoto / Type A2), this protein is 1-deoxy-D-xylulose 5-phosphate reductoisomerase.